Reading from the N-terminus, the 463-residue chain is Chaperone SurA (463 aa).

The N-terminal stretch at 1–25 is a signal peptide; sequence MTKPFSVLLASLLVITSTVSPLASA. PpiC domains lie at 174–276 and 289–388; these read GSQY…KLVE and LTEY…QRVG. 2 disordered regions span residues 329–348 and 434–463; these read ATAK…GDLG and GDRA…QPTR. The span at 440–452 shows a compositional bias: low complexity; sequence DATAAPEPAAAPA. The segment covering 453–463 has biased composition (pro residues); sequence APTPPPAQPTR.

The protein localises to the periplasm. The enzyme catalyses [protein]-peptidylproline (omega=180) = [protein]-peptidylproline (omega=0). In terms of biological role, chaperone involved in the correct folding and assembly of outer membrane proteins. Recognizes specific patterns of aromatic residues and the orientation of their side chains, which are found more frequently in integral outer membrane proteins. May act in both early periplasmic and late outer membrane-associated steps of protein maturation. In Xanthomonas campestris pv. campestris (strain 8004), this protein is Chaperone SurA.